The chain runs to 351 residues: tRNA N6-adenosine threonylcarbamoyltransferase (351 aa).

Fe cation is bound by residues His-111 and His-115. Substrate is bound by residues 134 to 138, Asp-167, Gly-180, and Asn-276; that span reads LVSGG. Residue Asp-304 participates in Fe cation binding.

This sequence belongs to the KAE1 / TsaD family. It depends on Fe(2+) as a cofactor.

The protein localises to the cytoplasm. The enzyme catalyses L-threonylcarbamoyladenylate + adenosine(37) in tRNA = N(6)-L-threonylcarbamoyladenosine(37) in tRNA + AMP + H(+). Required for the formation of a threonylcarbamoyl group on adenosine at position 37 (t(6)A37) in tRNAs that read codons beginning with adenine. Is involved in the transfer of the threonylcarbamoyl moiety of threonylcarbamoyl-AMP (TC-AMP) to the N6 group of A37, together with TsaE and TsaB. TsaD likely plays a direct catalytic role in this reaction. The polypeptide is tRNA N6-adenosine threonylcarbamoyltransferase (Marinobacter nauticus (strain ATCC 700491 / DSM 11845 / VT8) (Marinobacter aquaeolei)).